Here is a 183-residue protein sequence, read N- to C-terminus: ATP-dependent protease subunit HslV (183 aa).

Residue Thr-7 is part of the active site. The Na(+) site is built by Gly-162, Cys-165, and Thr-168.

It belongs to the peptidase T1B family. HslV subfamily. A double ring-shaped homohexamer of HslV is capped on each side by a ring-shaped HslU homohexamer. The assembly of the HslU/HslV complex is dependent on binding of ATP.

It is found in the cytoplasm. It catalyses the reaction ATP-dependent cleavage of peptide bonds with broad specificity.. With respect to regulation, allosterically activated by HslU binding. Functionally, protease subunit of a proteasome-like degradation complex believed to be a general protein degrading machinery. The sequence is that of ATP-dependent protease subunit HslV from Chromobacterium violaceum (strain ATCC 12472 / DSM 30191 / JCM 1249 / CCUG 213 / NBRC 12614 / NCIMB 9131 / NCTC 9757 / MK).